The primary structure comprises 318 residues: TPR repeat-containing protein MJ0940 (318 aa).

TPR repeat units lie at residues 17–50, 84–117, 119–151, 152–185, 186–219, 221–254, 255–288, and 289–318; these read SLTYLIKSYEYRDRGNLLESLYYLDKALELNPDF, PVAYALLGQLYELLGNFDNALECYEKSLGIEEKF, TAFFLKVLCLGLSGKYDELLKCCDRLISFAPNF, IPAYIIKANMLRKLGRYEEALACVNKVLELKEND, TNAIYLKALILNRIGNCDEALKYYEKLIDELNVT, IEVIREAIYLSFLFNKLDKAEKYIEMGLKLRPDD, ASLWYFKGKLYEKQNKFEEALKYYNKAIQLMPHH, and TKALLAKARVLEKLGRIEESIECYNKALDR.

The chain is TPR repeat-containing protein MJ0940 from Methanocaldococcus jannaschii (strain ATCC 43067 / DSM 2661 / JAL-1 / JCM 10045 / NBRC 100440) (Methanococcus jannaschii).